The primary structure comprises 1045 residues: Elongation factor 3 (1045 aa).

HEAT repeat units lie at residues 5 to 42 (DQSLKVLEELFKNLSVATADNRVEAAQEVASFLNGNII), 43 to 85 (EHDI…PSVE), 86 to 123 (PFVITLVPEICAKAGDKDKDVQAVASKTLVAISKAINP), 125 to 162 (AIKAYLPHLTKSLETTNKWQEKVSVLAAISALVDAAKE), 166 to 203 (LRMPELIPVLSETMWDTKKEVKEAATATMTKATETVDN), 205 to 241 (DIERFIPQLISCIADPKQVPETVHLLGATTFVAEVTP), and 242 to 279 (ATLSIMVPLLSRGLAERETSIKRKAAVIIDNMCKLVED). ADP-binding residues include Ile-42, His-44, and Ser-83. The ADP site is built by Thr-392, His-396, and Glu-397. ABC transporter domains lie at 426 to 641 (DEGE…YYEL) and 667 to 993 (VKVS…KKED). Positions 703, 922, 925, and 951 each coordinate ADP. A disordered region spans residues 974–1045 (SGHNWVSGQG…AYVSSDDEDF (72 aa)). The segment covering 1007 to 1031 (GGKKKKKLSSAELRKKKKERMKKKK) has biased composition (basic residues).

The protein belongs to the ABC transporter superfamily. ABCF family. EF3 subfamily. As to quaternary structure, monomer.

It is found in the cytoplasm. The protein localises to the cytosol. The enzyme catalyses ATP + H2O = ADP + phosphate + H(+). Its pathway is protein biosynthesis; polypeptide chain elongation. Functionally, ribosome-dependent ATPase that functions in cytoplasmic translation elongation. Required for the ATP-dependent release of deacylated tRNA from the ribosomal E-site during protein biosynthesis. Stimulates the eEF1A-dependent binding of aminoacyl-tRNA to the ribosomal A-site, which has reduced affinity for tRNA as long as the E-site is occupied. Assists translation termination by stimulating the release of nascent protein from the ribosome by release factors. In Candida glabrata (strain ATCC 2001 / BCRC 20586 / JCM 3761 / NBRC 0622 / NRRL Y-65 / CBS 138) (Yeast), this protein is Elongation factor 3 (TEF3).